We begin with the raw amino-acid sequence, 290 residues long: 3-keto-disaccharide hydrolase (290 aa).

The first 19 residues, 1 to 19, serve as a signal peptide directing secretion; sequence MKKVFYPLACCLAAGVLVS. The N-palmitoyl cysteine moiety is linked to residue Cys20. Residue Cys20 is the site of S-diacylglycerol cysteine attachment.

It localises to the cell membrane. It carries out the reaction 3-dehydro-alpha,alpha-trehalose + H2O = 3-dehydro-D-glucose + D-glucose. Functionally, 3-keto-disaccharide hydrolase that preferentially hydrolyzes 3-keto-trehalose (3-dehydro-alpha,alpha-trehalose). Important for disaccharide utilization in the human gut. Also shows hydrolysis activity with the glucosinolates glucoraphanin or glucobrassicin, but with much lower efficiency. The polypeptide is 3-keto-disaccharide hydrolase (Bacteroides thetaiotaomicron (strain ATCC 29148 / DSM 2079 / JCM 5827 / CCUG 10774 / NCTC 10582 / VPI-5482 / E50)).